We begin with the raw amino-acid sequence, 60 residues long: Cytotoxin SP15c (60 aa).

4 disulfides stabilise this stretch: Cys3–Cys21, Cys14–Cys38, Cys42–Cys53, and Cys54–Cys59.

It belongs to the three-finger toxin family. Short-chain subfamily. Type IA cytotoxin sub-subfamily. As to quaternary structure, monomer in solution; Homodimer and oligomer in the presence of negatively charged lipids forming a pore with a size ranging between 20 and 30 Angstroms. As to expression, expressed by the venom gland.

The protein resides in the secreted. Its subcellular location is the target cell membrane. Functionally, shows cytolytic activity on many different cells by forming pore in lipid membranes. In vivo, increases heart rate or kills the animal by cardiac arrest. In addition, it binds to heparin with high affinity, interacts with Kv channel-interacting protein 1 (KCNIP1) in a calcium-independent manner, and binds to integrin alpha-V/beta-3 (ITGAV/ITGB3) with moderate affinity. This Naja atra (Chinese cobra) protein is Cytotoxin SP15c.